A 509-amino-acid chain; its full sequence is Citrinin biosynthesis transcriptional activator mrl3 (509 aa).

The disordered stretch occupies residues 1–22 (MASTAHRQPSRPTTRQRQRTGR). The zn(2)-C6 fungal-type DNA-binding region spans 24–51 (CEECRRRKLRCDGQQPRCGVCVDSGVTC). Residues 97-143 (STPLTNDHHDGCSVSSASSRSDSNPPPTVSEPDMSLPNTTTSVSSAP) form a disordered region. Residues 109-119 (SVSSASSRSDS) are compositionally biased toward low complexity. Over residues 132–143 (LPNTTTSVSSAP) the composition is skewed to polar residues.

The protein resides in the nucleus. Transcription factor that regulates the expression of the gene cluster that mediates the biosynthesis of the mycotoxin citrinin, a hepato-nephrotoxic compound to humans due to inhibition of respiration complex III. This is Citrinin biosynthesis transcriptional activator mrl3 from Monascus ruber (Mold).